A 373-amino-acid polypeptide reads, in one-letter code: Chorismate synthase (373 aa).

Residues arginine 48 and arginine 54 each coordinate NADP(+). Residues arginine 131–serine 133, asparagine 243–alanine 244, glycine 288, lysine 303–serine 307, and arginine 329 contribute to the FMN site.

It belongs to the chorismate synthase family. As to quaternary structure, homotetramer. Requires FMNH2 as cofactor.

The catalysed reaction is 5-O-(1-carboxyvinyl)-3-phosphoshikimate = chorismate + phosphate. The protein operates within metabolic intermediate biosynthesis; chorismate biosynthesis; chorismate from D-erythrose 4-phosphate and phosphoenolpyruvate: step 7/7. Catalyzes the anti-1,4-elimination of the C-3 phosphate and the C-6 proR hydrogen from 5-enolpyruvylshikimate-3-phosphate (EPSP) to yield chorismate, which is the branch point compound that serves as the starting substrate for the three terminal pathways of aromatic amino acid biosynthesis. This reaction introduces a second double bond into the aromatic ring system. The sequence is that of Chorismate synthase from Beijerinckia indica subsp. indica (strain ATCC 9039 / DSM 1715 / NCIMB 8712).